The primary structure comprises 99 residues: Beta-2-microglobulin (99 aa).

In terms of domain architecture, Ig-like C1-type spans 5–93; that stretch reads PRVQVYSRHP…HITLSEPKIV (89 aa). An intrachain disulfide couples cysteine 25 to cysteine 80.

It belongs to the beta-2-microglobulin family. Heterodimer of an alpha chain and a beta chain. Beta-2-microglobulin is the beta-chain of major histocompatibility complex class I molecules.

It is found in the secreted. In terms of biological role, component of the class I major histocompatibility complex (MHC). Involved in the presentation of peptide antigens to the immune system. The polypeptide is Beta-2-microglobulin (B2M) (Cavia porcellus (Guinea pig)).